The primary structure comprises 394 residues: MNKYKRIFLVVMDSVGIGEAPDAEQFGDLGSDTIGHIAEHMNGLQMPNMVKLGLGNIREMKGISKVEKPLGYYTKMQEKSTGKDTMTGHWEIMGLYIDTPFQVFPEGFPKELLDELEEKTGRKIIGNKPASGTEILDELGQEQMETGSLIVYTSADSVLQIAAHEEVVPLDELYKICKIARELTLDEKYMVGRVIARPFVGEPGNFTRTPNRHDYALKPFGRTVMNELKDSDYDVIAIGKISDIYDGEGVTESLRTKSNMDGMDKLVDTLNMDFTGLSFLNLVDFDALFGHRRDPQGYGEALQEYDARLPEVFEKLKEDDLLLITADHGNDPVHHGTDHTREYVPLLAYSPSMKEGGKELPLRQTFADIGATVAENFGVKMPEYGTSFLNELKK.

6 residues coordinate Mn(2+): Asp-13, Asp-286, His-291, Asp-327, His-328, and His-339.

The protein belongs to the phosphopentomutase family. It depends on Mn(2+) as a cofactor.

The protein localises to the cytoplasm. It catalyses the reaction 2-deoxy-alpha-D-ribose 1-phosphate = 2-deoxy-D-ribose 5-phosphate. The catalysed reaction is alpha-D-ribose 1-phosphate = D-ribose 5-phosphate. The protein operates within carbohydrate degradation; 2-deoxy-D-ribose 1-phosphate degradation; D-glyceraldehyde 3-phosphate and acetaldehyde from 2-deoxy-alpha-D-ribose 1-phosphate: step 1/2. Functionally, isomerase that catalyzes the conversion of deoxy-ribose 1-phosphate (dRib-1-P) and ribose 1-phosphate (Rib-1-P) to deoxy-ribose 5-phosphate (dRib-5-P) and ribose 5-phosphate (Rib-5-P), respectively. The protein is Phosphopentomutase of Bacillus cereus (strain ATCC 10987 / NRS 248).